Reading from the N-terminus, the 263-residue chain is Superoxide dismutase [Fe] 3, chloroplastic (263 aa).

Residues M1–R41 constitute a chloroplast transit peptide. H74, H127, D211, and H215 together coordinate Fe cation.

It belongs to the iron/manganese superoxide dismutase family. In terms of assembly, homodimer. Heterodimer with FSD2. Interacts with MRL7. The cofactor is Fe cation.

It is found in the plastid. The protein localises to the chloroplast thylakoid. It carries out the reaction 2 superoxide + 2 H(+) = H2O2 + O2. Its activity is regulated as follows. Activated by cpn20/cpn21 (in vitro). Functionally, destroys superoxide anion radicals which are normally produced within the cells and which are toxic to biological systems. Plays important role in chloroplast development, particularly in the maintenance of thylakoids membranes. Seems to act as a heterodimer with FSD2. The chain is Superoxide dismutase [Fe] 3, chloroplastic from Arabidopsis thaliana (Mouse-ear cress).